Reading from the N-terminus, the 754-residue chain is RNA exonuclease 5 (754 aa).

The interval 1-36 (MELEEEENPRKRKETPNSALTTELDRPSWDVQDPEP) is disordered. The region spanning 222–370 (LFGLDCEVCL…EDARTALELV (149 aa)) is the Exonuclease domain. RRM domains are found at residues 488–562 (STIY…RLLT) and 583–662 (GTIY…RHLQ).

This chain is RNA exonuclease 5 (Rexo5), found in Rattus norvegicus (Rat).